Consider the following 373-residue polypeptide: SAM domain-containing protein SAMSN-1 (373 aa).

The segment at Met-1–Ala-72 is disordered. Positions Arg-20–Gly-25 match the Important for interaction with 14-3-3 proteins motif. 2 positions are modified to phosphoserine: Ser-23 and Ser-34. Over residues Lys-37 to Asp-48 the composition is skewed to basic and acidic residues. Polar residues predominate over residues Thr-50–Asn-61. Residue Ser-74 is modified to Phosphoserine. Thr-76 carries the post-translational modification Phosphothreonine. A phosphoserine mark is found at Ser-90 and Ser-119. Residues Glu-91–Arg-153 form a disordered region. A compositionally biased stretch (low complexity) spans Ser-123 to Thr-146. Position 160 is a phosphotyrosine (Tyr-160). Residues Pro-163–Glu-224 form the SH3 domain. The SAM domain maps to Lys-241–Glu-305. Positions Asp-337–Leu-359 are disordered.

In terms of assembly, interacts with FASLG. Interacts with phosphotyrosine containing proteins. Interacts (via SH3 domain) with CTTN. Interacts (phosphorylated at Ser-23) with YWHAB, YWHAE, YWHAG, YWHAH, YWHAZ and SFN. Interacts directly with SAP30 and HDAC1. Identified in a complex with SAP30 and HDAC1. In terms of tissue distribution, detected in peripheral blood B-cells (at protein level). Detected in spleen, liver and peripheral blood.

Its subcellular location is the nucleus. It localises to the cytoplasm. The protein resides in the cell projection. It is found in the ruffle. In terms of biological role, negative regulator of B-cell activation. Down-regulates cell proliferation (in vitro). Promotes RAC1-dependent membrane ruffle formation and reorganization of the actin cytoskeleton. Regulates cell spreading and cell polarization. Stimulates HDAC1 activity. Regulates LYN activity by modulating its tyrosine phosphorylation. In Homo sapiens (Human), this protein is SAM domain-containing protein SAMSN-1 (SAMSN1).